Reading from the N-terminus, the 244-residue chain is Diablo homolog, mitochondrial (244 aa).

The transit peptide at 1–38 (MASLPRRLIWSFSYILRESFPIVSRRNCVSLLRASWRK) directs the protein to the mitochondrion. The short motif at 50–54 (AIPVG) is the IAP-binding element. Basic and acidic residues predominate over residues 207-218 (DEIKRTITEDKG). The segment at 207 to 244 (DEIKRTITEDKGNPPSGGSPRSSLSEEEEIPEAYLRED) is disordered. Over residues 220-229 (PPSGGSPRSS) the composition is skewed to low complexity.

It belongs to the Smac/DIABLO protein family. As to quaternary structure, homodimer.

It is found in the mitochondrion. In terms of biological role, promotes apoptosis. Acts by opposing the inhibitory activity of inhibitor of apoptosis proteins (IAP). This Xenopus tropicalis (Western clawed frog) protein is Diablo homolog, mitochondrial.